A 187-amino-acid chain; its full sequence is MIILGIDEAGRGPLSGPVVAAGVILDQDKIIDGLADSKKLTEKKRQSLYQQIITHAKAYTIVEISPQQIDELNILQATLKAMHQVANNLERQFDKVLVDGNKLPNWDYNSEAIVKGDSKIIEISAASILAKVHRDNICLEHDRLYPQYGFAKHKGYPTKEHLENIKKYGVLDIHRKSYKPVQVLLNE.

The RNase H type-2 domain maps to M1–E187. 3 residues coordinate a divalent metal cation: D7, E8, and D99.

This sequence belongs to the RNase HII family. Mn(2+) is required as a cofactor. Requires Mg(2+) as cofactor.

The protein localises to the cytoplasm. The enzyme catalyses Endonucleolytic cleavage to 5'-phosphomonoester.. In terms of biological role, endonuclease that specifically degrades the RNA of RNA-DNA hybrids. The chain is Ribonuclease HII from Francisella tularensis subsp. tularensis (strain FSC 198).